The primary structure comprises 155 residues: Small ribosomal subunit protein uS7c (155 aa).

The protein belongs to the universal ribosomal protein uS7 family. As to quaternary structure, part of the 30S ribosomal subunit.

The protein localises to the plastid. The protein resides in the chloroplast. In terms of biological role, one of the primary rRNA binding proteins, it binds directly to 16S rRNA where it nucleates assembly of the head domain of the 30S subunit. The sequence is that of Small ribosomal subunit protein uS7c from Beta vulgaris (Sugar beet).